A 46-amino-acid chain; its full sequence is Photosystem II reaction center protein K (46 aa).

Residues 1 to 9 constitute a propeptide that is removed on maturation; sequence MLILFNTFA. A helical membrane pass occupies residues 25-45; that stretch reads LPLIPLFFFLLVFVWQAAVGF.

It belongs to the PsbK family. As to quaternary structure, PSII is composed of 1 copy each of membrane proteins PsbA, PsbB, PsbC, PsbD, PsbE, PsbF, PsbH, PsbI, PsbJ, PsbK, PsbL, PsbM, PsbT, PsbX, PsbY, Psb30/Ycf12, peripheral proteins PsbO, CyanoQ (PsbQ), PsbU, PsbV and a large number of cofactors. It forms dimeric complexes.

The protein localises to the cellular thylakoid membrane. In terms of biological role, one of the components of the core complex of photosystem II (PSII). PSII is a light-driven water:plastoquinone oxidoreductase that uses light energy to abstract electrons from H(2)O, generating O(2) and a proton gradient subsequently used for ATP formation. It consists of a core antenna complex that captures photons, and an electron transfer chain that converts photonic excitation into a charge separation. This chain is Photosystem II reaction center protein K, found in Prochlorococcus marinus (strain MIT 9301).